Reading from the N-terminus, the 208-residue chain is Guanylate kinase (208 aa).

Positions 21 to 201 (GRVVVLSGPS…ACAELVSLLV (181 aa)) constitute a Guanylate kinase-like domain. 28–35 (GPSAVGKS) contacts ATP.

The protein belongs to the guanylate kinase family.

The protein resides in the cytoplasm. The catalysed reaction is GMP + ATP = GDP + ADP. Functionally, essential for recycling GMP and indirectly, cGMP. This chain is Guanylate kinase (gmk), found in Mycobacterium bovis (strain ATCC BAA-935 / AF2122/97).